The sequence spans 545 residues: Cannabidiolic acid synthase-like 2 (545 aa).

The first 28 residues, Met-1–Ala-28, serve as a signal peptide directing secretion. Cys-37 and Cys-99 are disulfide-bonded. Asn-45, Asn-65, Asn-89, and Asn-168 each carry an N-linked (GlcNAc...) asparagine glycan. An FAD-binding PCMH-type domain is found at Thr-77 to Val-251. The segment at residues His-114–Cys-176 is a cross-link (6-(S-cysteinyl)-8alpha-(pros-histidyl)-FAD (His-Cys)). Residue His-292 coordinates substrate. Asn-297, Asn-305, Asn-329, and Asn-361 each carry an N-linked (GlcNAc...) asparagine glycan. A substrate-binding site is contributed by Tyr-417. Residue Asn-467 is glycosylated (N-linked (GlcNAc...) asparagine). The active-site Proton acceptor is Tyr-484. N-linked (GlcNAc...) asparagine glycosylation occurs at Asn-499.

The protein belongs to the oxygen-dependent FAD-linked oxidoreductase family. FAD is required as a cofactor. The FAD cofactor is bound via a bicovalent 6-S-cysteinyl, 8alpha-N1-histidyl FAD linkage.

Its subcellular location is the secreted. Its function is as follows. Has no cannabidiolic acid synthase activity. The chain is Cannabidiolic acid synthase-like 2 (CBDAS3) from Cannabis sativa (Hemp).